We begin with the raw amino-acid sequence, 508 residues long: Monocarboxylate transporter 9 (508 aa).

Helical transmembrane passes span 13-33 (WVIVVVSFFTQFLCYGSPLAV), 53-73 (WVGSLASGVGLLASPVCSLFV), 80-100 (PVTIFSGFLVAGGLMLSSLAP), 102-122 (IYFLFFSYGIVVGLGCGLLYT), 137-157 (GLALGLISTGSSVGLFIYAAL), and 164-184 (FYGLDGCLLIVGALALNILAC). The segment at 242–263 (GDWGRETSLPKNPTGAAHTKEP) is disordered. The next 6 helical transmembrane spans lie at 303–323 (VFSALFVAILLFDIGGFPPSL), 341–361 (IPLISIFGIMTAVGKLLLGIL), 370–390 (LYLYVATLIITGLALCAIPLA), 396–416 (LAILSGILGFLTGNWSIFPYV), 431–451 (GILMFFAGLGNSLGPPIVGWF), and 460–480 (IAFYFSGFCVLLGGFILLLAI).

It belongs to the major facilitator superfamily. Monocarboxylate porter (TC 2.A.1.13) family. As to expression, expressed in the liver and kidneys. In the liver localizes on the sinusoidal membrane of the hepatocytes.

Its subcellular location is the cell membrane. It catalyses the reaction creatine(in) = creatine(out). The catalysed reaction is (R)-carnitine(in) = (R)-carnitine(out). Extracellular pH-and Na(+)-sensitive low-affinity creatine transporter. Also functions as a pH-independent carnitine efflux transporter. The protein is Monocarboxylate transporter 9 (Slc16a9) of Rattus norvegicus (Rat).